The chain runs to 53 residues: Ribulose bisphosphate carboxylase large chain (53 aa).

Residues Met1–Ser2 constitute a propeptide that is removed on maturation. At Pro3 the chain carries N-acetylproline. Residue Lys14 is modified to N6,N6,N6-trimethyllysine.

Belongs to the RuBisCO large chain family. Type I subfamily. In terms of assembly, heterohexadecamer of 8 large chains and 8 small chains.

It localises to the plastid. It is found in the chloroplast. The enzyme catalyses 2 (2R)-3-phosphoglycerate + 2 H(+) = D-ribulose 1,5-bisphosphate + CO2 + H2O. It catalyses the reaction D-ribulose 1,5-bisphosphate + O2 = 2-phosphoglycolate + (2R)-3-phosphoglycerate + 2 H(+). Functionally, ruBisCO catalyzes two reactions: the carboxylation of D-ribulose 1,5-bisphosphate, the primary event in carbon dioxide fixation, as well as the oxidative fragmentation of the pentose substrate in the photorespiration process. Both reactions occur simultaneously and in competition at the same active site. This is Ribulose bisphosphate carboxylase large chain (rbcL) from Malus domestica (Apple).